Consider the following 47-residue polypeptide: Large ribosomal subunit protein bL34 (47 aa).

Belongs to the bacterial ribosomal protein bL34 family.

The polypeptide is Large ribosomal subunit protein bL34 (Mycolicibacterium vanbaalenii (strain DSM 7251 / JCM 13017 / BCRC 16820 / KCTC 9966 / NRRL B-24157 / PYR-1) (Mycobacterium vanbaalenii)).